A 150-amino-acid polypeptide reads, in one-letter code: Protein-export protein SecB (150 aa).

It belongs to the SecB family. Homotetramer, a dimer of dimers. One homotetramer interacts with 1 SecA dimer.

The protein resides in the cytoplasm. In terms of biological role, one of the proteins required for the normal export of preproteins out of the cell cytoplasm. It is a molecular chaperone that binds to a subset of precursor proteins, maintaining them in a translocation-competent state. It also specifically binds to its receptor SecA. The sequence is that of Protein-export protein SecB from Psychrobacter cryohalolentis (strain ATCC BAA-1226 / DSM 17306 / VKM B-2378 / K5).